The chain runs to 584 residues: Protein BONZAI 3 (584 aa).

The segment at 1 to 23 (MGGCLSGDVKGGKQAIGGVQQRP) is disordered. Gly-2 carries N-myristoyl glycine lipidation. 2 C2 domains span residues 34 to 167 (HNDA…TLTL) and 178 to 305 (NRNL…NFVY). Ca(2+) contacts are provided by Asp-67, Asp-73, Asp-126, Asp-128, and Asp-145. The region spanning 344–563 (NFMVAVDFTA…SVVQALLEEL (220 aa)) is the VWFA domain.

This sequence belongs to the copine family. In terms of assembly, interacts with BAP1 and BAP2. Ca(2+) is required as a cofactor. As to expression, expressed at an extremely low level.

It is found in the cell membrane. Its function is as follows. Negative regulator of cell death and defense responses. Repress a number of R genes and may have effects in promoting growth and development. May function in membrane trafficking and in fusion of vesicles with plasma membrane. In Arabidopsis thaliana (Mouse-ear cress), this protein is Protein BONZAI 3 (BON3).